Reading from the N-terminus, the 293-residue chain is Aspartate carbamoyltransferase catalytic subunit (293 aa).

Carbamoyl phosphate contacts are provided by arginine 50 and threonine 51. Residue lysine 78 coordinates L-aspartate. Arginine 100, histidine 127, and glutamine 130 together coordinate carbamoyl phosphate. L-aspartate is bound by residues arginine 160 and arginine 210. Residues alanine 253 and proline 254 each contribute to the carbamoyl phosphate site.

Belongs to the aspartate/ornithine carbamoyltransferase superfamily. ATCase family. As to quaternary structure, heterododecamer (2C3:3R2) of six catalytic PyrB chains organized as two trimers (C3), and six regulatory PyrI chains organized as three dimers (R2).

The enzyme catalyses carbamoyl phosphate + L-aspartate = N-carbamoyl-L-aspartate + phosphate + H(+). The protein operates within pyrimidine metabolism; UMP biosynthesis via de novo pathway; (S)-dihydroorotate from bicarbonate: step 2/3. Catalyzes the condensation of carbamoyl phosphate and aspartate to form carbamoyl aspartate and inorganic phosphate, the committed step in the de novo pyrimidine nucleotide biosynthesis pathway. This chain is Aspartate carbamoyltransferase catalytic subunit, found in Staphylococcus epidermidis (strain ATCC 12228 / FDA PCI 1200).